Here is a 624-residue protein sequence, read N- to C-terminus: Ceramide transfer protein (624 aa).

The segment covering 1 to 11 (MSDNQSWNSSG) has biased composition (polar residues). Residues 1–24 (MSDNQSWNSSGSEEDPETESGPPV) form a disordered region. In terms of domain architecture, PH spans 23 to 117 (PVERCGVLSK…WVDAIEQHKT (95 aa)). A phosphoserine mark is found at Ser-126, Ser-132, and Ser-135. The segment at 202–221 (DDEDDFPTTRSDGDFLHNTN) is disordered. A coiled-coil region spans residues 263–303 (IELMVKREESWQKRHDREVEKRRRVEEAYKNVMEELKKKPR). At Ser-315 the chain carries Phosphoserine. The short motif at 321–327 (EFFDAVE) is the FFAT element. Tyr-372 bears the Phosphotyrosine mark. Ser-373, Ser-377, and Ser-380 each carry phosphoserine. Positions 389–618 (DVHRFSSQVE…FTSYVQEKTA (230 aa)) constitute an START domain. Positions 472, 493, 530, and 579 each coordinate an N-acylsphing-4-enine.

In terms of assembly, interacts with VAPA and VAPB. Interaction with VAPB is less efficient than with VAPA. Interacts (via FFAT motif) with MOSPD2 (via MSP domain). Post-translationally, phosphorylation on Ser-132 decreases the affinity toward phosphatidylinositol 4-phosphate at Golgi membranes and reduces ceramide transfer activity. Inactivated by hyperphosphorylation of serine residues by CSNK1G2/CK1 that triggers dissociation from the Golgi complex, thus down-regulating ER-to-Golgi transport of ceramide and sphingomyelin synthesis.

It is found in the cytoplasm. Its subcellular location is the golgi apparatus. It localises to the endoplasmic reticulum. It carries out the reaction N-hexadecanoylsphing-4-enine(in) = N-hexadecanoylsphing-4-enine(out). Shelters ceramides and diacylglycerol lipids inside its START domain and mediates the intracellular trafficking of ceramides and diacylglycerol lipids in a non-vesicular manner. This chain is Ceramide transfer protein (Cert1), found in Mus musculus (Mouse).